The chain runs to 162 residues: Ribosome maturation factor RimP (162 aa).

The protein belongs to the RimP family.

It is found in the cytoplasm. In terms of biological role, required for maturation of 30S ribosomal subunits. This is Ribosome maturation factor RimP from Cupriavidus taiwanensis (strain DSM 17343 / BCRC 17206 / CCUG 44338 / CIP 107171 / LMG 19424 / R1) (Ralstonia taiwanensis (strain LMG 19424)).